The primary structure comprises 199 residues: uncharacterized protein (199 aa).

The stretch at 71-104 (RANATNKLTVIAEQIQHLQEQARKVLEDARRDAD) forms a coiled coil.

This is an uncharacterized protein from Mus musculus (Mouse).